The sequence spans 186 residues: Transposons Tn1721 resolvase (186 aa).

Positions 4 to 137 (HRIGYVRVSS…EGIALAKQRG (134 aa)) constitute a Resolvase/invertase-type recombinase catalytic domain. The O-(5'-phospho-DNA)-serine intermediate role is filled by Ser-12. Positions 164–183 (KAQLAREFNISRETLYQYLR) form a DNA-binding region, H-T-H motif.

This sequence belongs to the site-specific recombinase resolvase family.

Functionally, resolvase catalyzes the resolution (a site-specific recombination) of the cointegrated replicon to yield the final transposition products. This chain is Transposons Tn1721 resolvase (tnpR), found in Escherichia coli.